The primary structure comprises 223 residues: Protein DEHYDRATION-INDUCED 19 homolog 3 (223 aa).

T114 carries the post-translational modification Phosphothreonine. Residue S116 is modified to Phosphoserine.

It belongs to the Di19 family. Post-translationally, phosphorylated in vitro by CPK3 or CPK11. As to expression, expressed in seedlings, roots, leaves, stems, flowers and siliques.

The protein localises to the nucleus. This chain is Protein DEHYDRATION-INDUCED 19 homolog 3 (DI19-3), found in Arabidopsis thaliana (Mouse-ear cress).